Here is a 476-residue protein sequence, read N- to C-terminus: Probable coniferyl aldehyde dehydrogenase (476 aa).

Catalysis depends on residues Glu225 and Cys259.

This sequence belongs to the aldehyde dehydrogenase family. As to quaternary structure, homodimer.

It catalyses the reaction (E)-coniferaldehyde + NADP(+) + H2O = (E)-ferulate + NADPH + 2 H(+). It carries out the reaction (E)-coniferaldehyde + NAD(+) + H2O = (E)-ferulate + NADH + 2 H(+). This chain is Probable coniferyl aldehyde dehydrogenase (calB), found in Pseudomonas aeruginosa (strain ATCC 15692 / DSM 22644 / CIP 104116 / JCM 14847 / LMG 12228 / 1C / PRS 101 / PAO1).